A 373-amino-acid polypeptide reads, in one-letter code: MMAAKREHADCGAEPARKRVKENYKRVTGKLLSKMTISLENHLYYTFTFRLLNENKTEAYYGNLQCFKDLVEQECYDVSLNFVKTKYNERIEINEYSKCDAAIDENVAVKLCLTRADFENEEIVNVLAKLKCVFKRLGANNYKMVFDINMQDAGGAVFVQQVECFANLKVLASAAKAFVKSPDNFNSLMDFYYKNTNTLFYVHGVRCQHTSKGQNEFLNWTAGPSTSLETPSNTDNEDYINLVHSHSTNNISRANKHLKSMQLSLFKAEQKINDNGKHSFSVQFKTLDSMDDDDDTKWHKCVYYVDSNGNKEDPNDTNAVQKLAMDFDQLATCLADKLTKATIFVTADNADASTMNLLGLLKHDDEECEYQFL.

It belongs to the baculoviridae LEF-3 family. As to quaternary structure, interacts with alkaline nuclease.

It is found in the host nucleus. Functionally, required for late and very late gene expression. Lef-3 could be a single-stranded DNA-binding protein. The chain is Late expression factor 3 (LEF-3) from Orgyia pseudotsugata (Douglas-fir tussock moth).